We begin with the raw amino-acid sequence, 312 residues long: Transcription initiation factor IIB-2 (312 aa).

Residues Ser2–Glu34 form a TFIIB-type zinc finger. Zn(2+)-binding residues include Cys6, Cys9, Cys26, and Cys29. Repeat copies occupy residues Met115 to Lys192 and Phe216 to Pro290.

Belongs to the TFIIB family. As to quaternary structure, associates with TFIID-IIA (DA complex) to form TFIID-IIA-IIB (DAB-complex) which is then recognized by polymerase II.

It localises to the nucleus. Its function is as follows. General factor that plays a major role in the activation of eukaryotic genes transcribed by RNA polymerase II. In Arabidopsis thaliana (Mouse-ear cress), this protein is Transcription initiation factor IIB-2 (TFIIB2).